We begin with the raw amino-acid sequence, 273 residues long: uncharacterized protein (273 aa).

The protein resides in the virion. This is an uncharacterized protein from Acanthamoeba polyphaga (Amoeba).